The primary structure comprises 551 residues: RanBD1 domain-containing protein C584.03c (551 aa).

In terms of domain architecture, RanBD1 spans 1-309 (MDELLNVASH…LLLKYADDET (309 aa)). Ser-441 carries the phosphoserine modification. The interval 522 to 551 (SVIPHSEPESSSKVINCQAKLNVEKEKKNP) is disordered.

Its subcellular location is the nucleus. The protein is RanBD1 domain-containing protein C584.03c of Schizosaccharomyces pombe (strain 972 / ATCC 24843) (Fission yeast).